A 272-amino-acid polypeptide reads, in one-letter code: Hydroxyethylthiazole kinase (272 aa).

Met-45 is a binding site for substrate. Residues Arg-121 and Thr-168 each coordinate ATP. Position 195 (Gly-195) interacts with substrate.

Belongs to the Thz kinase family. Homotrimer. It depends on Mg(2+) as a cofactor.

The catalysed reaction is 5-(2-hydroxyethyl)-4-methylthiazole + ATP = 4-methyl-5-(2-phosphooxyethyl)-thiazole + ADP + H(+). It functions in the pathway cofactor biosynthesis; thiamine diphosphate biosynthesis; 4-methyl-5-(2-phosphoethyl)-thiazole from 5-(2-hydroxyethyl)-4-methylthiazole: step 1/1. Its function is as follows. Catalyzes the phosphorylation of the hydroxyl group of 4-methyl-5-beta-hydroxyethylthiazole (THZ). This Bacillus subtilis (strain 168) protein is Hydroxyethylthiazole kinase.